Consider the following 152-residue polypeptide: MSTINTDTNETMPHISVNAQYIKDLSLENPSAPSSLAALDQRPQIDLSLDINITNLSEENFYEVELNIEAIARNEKYKLFQIELKYAGVFNLINIDSEQHPVLLSVHCPAMIFPFARKIIASCTQDAGFQPLMIDPIDFGALYHKKMSEHQN.

It belongs to the SecB family. Homotetramer, a dimer of dimers. One homotetramer interacts with 1 SecA dimer.

Its subcellular location is the cytoplasm. Functionally, one of the proteins required for the normal export of preproteins out of the cell cytoplasm. It is a molecular chaperone that binds to a subset of precursor proteins, maintaining them in a translocation-competent state. It also specifically binds to its receptor SecA. This chain is Protein-export protein SecB, found in Rickettsia conorii (strain ATCC VR-613 / Malish 7).